The sequence spans 364 residues: Anthranilate phosphoribosyltransferase (364 aa).

5-phospho-alpha-D-ribose 1-diphosphate is bound by residues G101, 104–105, T109, 111–114, 129–137, and G141; these read GD, NLST, and KHGNRAASS. G101 contributes to the anthranilate binding site. S113 is a binding site for Mg(2+). An anthranilate-binding site is contributed by N132. Residue R187 coordinates anthranilate. 2 residues coordinate Mg(2+): D245 and E246.

Belongs to the anthranilate phosphoribosyltransferase family. As to quaternary structure, homodimer. Mg(2+) serves as cofactor.

The enzyme catalyses N-(5-phospho-beta-D-ribosyl)anthranilate + diphosphate = 5-phospho-alpha-D-ribose 1-diphosphate + anthranilate. Its pathway is amino-acid biosynthesis; L-tryptophan biosynthesis; L-tryptophan from chorismate: step 2/5. In terms of biological role, catalyzes the transfer of the phosphoribosyl group of 5-phosphorylribose-1-pyrophosphate (PRPP) to anthranilate to yield N-(5'-phosphoribosyl)-anthranilate (PRA). This chain is Anthranilate phosphoribosyltransferase, found in Mycolicibacterium gilvum (strain PYR-GCK) (Mycobacterium gilvum (strain PYR-GCK)).